Reading from the N-terminus, the 69-residue chain is NADH dehydrogenase [ubiquinone] 1 beta subcomplex subunit 2 (69 aa).

The protein belongs to the complex I NDUFB2 subunit family. In terms of assembly, complex I is composed of at least 49 different subunits.

The protein localises to the mitochondrion inner membrane. In terms of biological role, accessory subunit of the mitochondrial membrane respiratory chain NADH dehydrogenase (Complex I), that is believed not to be involved in catalysis. Complex I functions in the transfer of electrons from NADH to the respiratory chain. The immediate electron acceptor for the enzyme is believed to be ubiquinone. This Arabidopsis thaliana (Mouse-ear cress) protein is NADH dehydrogenase [ubiquinone] 1 beta subcomplex subunit 2.